The primary structure comprises 669 residues: Small ribosomal subunit protein mS39 (669 aa).

The N-terminal 13 residues, 1–13 (MAAPCVRLGSVRC), are a transit peptide targeting the mitochondrion. PPR repeat units lie at residues 129 to 163 (IEGVSEEALKERIQLRRIKESIDLFDQLLQGGTAP), 164 to 199 (SLETTNRLLDLICFYGDREPTRDIQTSEQNQQDDQD), 209 to 239 (RPGQYRKASEILGSWRENNNAERIFNLMPER), 240 to 274 (NAHSFCTLIQGMVKYGSSNKAFNTYTDLMNNRLTA), 275 to 314 (DVQTFNALILAAPDMKEKYNEKWDLIVELLKHMVQQNVRP), 315 to 351 (NLLTFNSVLKSLRKCGTMARGLALQTINEMKALNIEP), 352 to 392 (SLGT…FTLR), 396 to 430 (DVYFFTNAMRVCLDLKDIELAYRLHALQQTADNRG), 438 to 472 (QSTYYGRFFNLLCMMENIDVILKWYRELIPSLYYP), 473 to 507 (NSRGMLDLLQALDMDNCLDLIPQIWKDIKQIGHSN), and 556 to 590 (SSASLGNISVLLARAGRTEEAWKMLQRFKTNHRVP). The interval 186-218 (DIQTSEQNQQDDQDQQETEDSKKRPGQYRKASE) is disordered. Acidic residues predominate over residues 194–203 (QQDDQDQQET). The segment at 648–669 (EDLQKSHSSSSSSSESSDSDRE) is disordered. Low complexity predominate over residues 653–663 (SHSSSSSSSES).

Belongs to the mitochondrion-specific ribosomal protein mS39 family.

The protein localises to the mitochondrion. Functionally, mitochondrial protein that may have a role in mitochondrial translation. The polypeptide is Small ribosomal subunit protein mS39 (ptcd3) (Xenopus laevis (African clawed frog)).